The sequence spans 427 residues: Peptidase B (427 aa).

The Mn(2+) site is built by lysine 195 and aspartate 200. Lysine 207 is a catalytic residue. Positions 218, 277, and 279 each coordinate Mn(2+). Arginine 281 is a catalytic residue.

It belongs to the peptidase M17 family. In terms of assembly, homohexamer. Mn(2+) serves as cofactor.

Its subcellular location is the cytoplasm. The enzyme catalyses Release of an N-terminal amino acid, Xaa, from a peptide or arylamide. Xaa is preferably Glu or Asp but may be other amino acids, including Leu, Met, His, Cys and Gln.. Probably plays an important role in intracellular peptide degradation. In Shigella dysenteriae serotype 1 (strain Sd197), this protein is Peptidase B.